Consider the following 233-residue polypeptide: Gamma-interferon-responsive lysosomal thiol protein (233 aa).

Residues 1–26 form the signal peptide; it reads MVSSSLTKLVFFGCLLLLTFTDNLVA. Cysteine 42 and cysteine 45 are oxidised to a cystine. Residues asparagine 80 and asparagine 207 are each glycosylated (N-linked (GlcNAc...) asparagine). Positions 200 to 233 are cleaved as a propeptide — removed in mature form; that stretch reads TTLPKVCNSSASMSKSPERKWKLQVSYANKATNY.

The protein belongs to the GILT family. In terms of assembly, dimer; disulfide-linked. In terms of tissue distribution, expressed in the outer integument of seed coat.

Its subcellular location is the secreted. The protein localises to the lysosome. Functionally, lysosomal thiol reductase that can reduce protein disulfide bonds. May facilitate the complete unfolding of proteins destined for lysosomal degradation. This Arabidopsis thaliana (Mouse-ear cress) protein is Gamma-interferon-responsive lysosomal thiol protein.